A 184-amino-acid chain; its full sequence is Dual specificity protein phosphatase 22 (184 aa).

G2 carries the N-myristoyl glycine lipid modification. The region spanning 4–144 (GMSQILPGLY…LQEFEKHEVH (141 aa)) is the Tyrosine-protein phosphatase domain. C88 acts as the Phosphocysteine intermediate in catalysis. 5 residues coordinate a protein: L89, A90, V92, S93, and R94.

The protein belongs to the protein-tyrosine phosphatase family. Non-receptor class dual specificity subfamily. Monomer. Interacts with LCK; the interaction is direct. Interacts with UBR2; the interaction is direct. Post-translationally, myristoylation regulates subcellular location, and is necessary for activation of JNK.

The protein localises to the cytoplasm. It carries out the reaction O-phospho-L-tyrosyl-[protein] + H2O = L-tyrosyl-[protein] + phosphate. It catalyses the reaction O-phospho-L-seryl-[protein] + H2O = L-seryl-[protein] + phosphate. The catalysed reaction is O-phospho-L-threonyl-[protein] + H2O = L-threonyl-[protein] + phosphate. In terms of biological role, dual specificity phosphatase; can dephosphorylate both phosphotyrosine and phosphoserine or phosphothreonine residues. Activates the JNK signaling pathway. Inhibits T-cell receptor signaling and T-cell mediated immune responses, acting, at least in part, by inducing degradation of E3 ubiquitin ligase UBR2. Dephosphorylates and thereby induces 'Lys-48'-linked ubiquitination of UBR2, leading to proteasomal degradation of UBR2. Dephosphorylates and thereby inactivates tyrosine kinase LCK. Inhibits UBR2-mediated 'Lys-63'-linked ubiquitination of LCK. May play a role in B-cell receptor (BCR) signaling and B-cell function. This is Dual specificity protein phosphatase 22 (Dusp22) from Mus musculus (Mouse).